The primary structure comprises 343 residues: Thioredoxin domain-containing protein 15 (343 aa).

The signal sequence occupies residues 1 to 20 (MQLLCWWQILLWVLGLPARG). Over 21-304 (LEEDSGHTWQ…GPLPSTLVKT (284 aa)) the chain is Extracellular. Residues 86 to 95 (EDQRSTEAHD) are compositionally biased toward basic and acidic residues. The tract at residues 86–112 (EDQRSTEAHDGTCSAQGDEDPRCGGRE) is disordered. The region spanning 162–279 (ERNVTGLENF…LKIFIFNQTG (118 aa)) is the Thioredoxin domain. N-linked (GlcNAc...) asparagine glycosylation is found at Asn170, Asn177, Asn189, and Asn276. A helical transmembrane segment spans residues 305-325 (VDWLLVFSLFFLISFIMYATI). The Cytoplasmic portion of the chain corresponds to 326–343 (RTESIRWLIPGQEQEHAE).

It localises to the cell projection. The protein resides in the cilium membrane. Its function is as follows. Acts as a positive regulator of ciliary hedgehog signaling. Required for cilia biogenesis. In Rattus norvegicus (Rat), this protein is Thioredoxin domain-containing protein 15 (Txndc15).